The following is a 286-amino-acid chain: Aminoglycoside N(3)-acetyltransferase VIII (286 aa).

Belongs to the antibiotic N-acetyltransferase family.

It catalyses the reaction a 2-deoxystreptamine antibiotic + acetyl-CoA = an N(3)-acetyl-2-deoxystreptamine antibiotic + CoA + H(+). Resistance to neomycin. The sequence is that of Aminoglycoside N(3)-acetyltransferase VIII (aacC8) from Streptomyces fradiae (Streptomyces roseoflavus).